A 117-amino-acid polypeptide reads, in one-letter code: Ig lambda-1 chain V region (117 aa).

An N-terminal signal peptide occupies residues 1–20 (MAWISLILSLLALSSGGAIS). The residue at position 21 (glutamine 21) is a Pyrrolidone carboxylic acid. In terms of domain architecture, Ig-like spans 21–117 (QAVVTQESAL…YFCALWYSNH (97 aa)).

This chain is Ig lambda-1 chain V region, found in Mus musculus (Mouse).